The following is a 242-amino-acid chain: ATP synthase subunit a (242 aa).

6 helical membrane-spanning segments follow: residues 29 to 49, 84 to 104, 114 to 134, 140 to 160, 181 to 201, and 203 to 223; these read SSIY…LAFY, FIPL…LGMT, IIVT…VGFV, FLTL…MIVI, MAGH…MIYL, and FLPI…AILQ.

It belongs to the ATPase A chain family. In terms of assembly, F-type ATPases have 2 components, CF(1) - the catalytic core - and CF(0) - the membrane proton channel. CF(1) has five subunits: alpha(3), beta(3), gamma(1), delta(1), epsilon(1). CF(0) has three main subunits: a(1), b(2) and c(9-12). The alpha and beta chains form an alternating ring which encloses part of the gamma chain. CF(1) is attached to CF(0) by a central stalk formed by the gamma and epsilon chains, while a peripheral stalk is formed by the delta and b chains.

Its subcellular location is the cell inner membrane. Key component of the proton channel; it plays a direct role in the translocation of protons across the membrane. The sequence is that of ATP synthase subunit a from Rickettsia conorii (strain ATCC VR-613 / Malish 7).